Here is a 476-residue protein sequence, read N- to C-terminus: Probable periplasmic serine endoprotease DegP-like (476 aa).

The N-terminal stretch at 1–27 is a signal peptide; the sequence is MSIPRLKSYFTILATVLVLGQAVSAQA. Catalysis depends on charge relay system residues H116, D146, and S219. Residues 217–219 and 274–278 contribute to the substrate site; these read GNS and LGVVI. PDZ domains are found at residues 263-354 and 360-465; these read LKTG…IRDG and ELTV…LRQG.

The protein belongs to the peptidase S1C family.

It localises to the periplasm. The catalysed reaction is Acts on substrates that are at least partially unfolded. The cleavage site P1 residue is normally between a pair of hydrophobic residues, such as Val-|-Val.. Its function is as follows. Might be efficient in the degradation of transiently denatured and unfolded proteins which accumulate in the periplasm following stress conditions. This chain is Probable periplasmic serine endoprotease DegP-like (mucD), found in Pseudomonas fluorescens (strain ATCC BAA-477 / NRRL B-23932 / Pf-5).